The following is a 139-amino-acid chain: Holo-[acyl-carrier-protein] synthase (139 aa).

Asp-8 and Glu-57 together coordinate Mg(2+).

This sequence belongs to the P-Pant transferase superfamily. AcpS family. Mg(2+) serves as cofactor.

The protein resides in the cytoplasm. It catalyses the reaction apo-[ACP] + CoA = holo-[ACP] + adenosine 3',5'-bisphosphate + H(+). Transfers the 4'-phosphopantetheine moiety from coenzyme A to a Ser of acyl-carrier-protein. This is Holo-[acyl-carrier-protein] synthase from Rhizobium meliloti (strain 1021) (Ensifer meliloti).